The primary structure comprises 148 residues: Glycine cleavage system H protein 5 (148 aa).

Residues 33-115 (VFTIGLTSVA…YGQGWIAKVK (83 aa)) form the Lipoyl-binding domain. An N6-lipoyllysine modification is found at Lys74.

The protein belongs to the GcvH family. As to quaternary structure, the glycine cleavage system is composed of four proteins: P, T, L and H. (R)-lipoate serves as cofactor.

In terms of biological role, the glycine cleavage system catalyzes the degradation of glycine. The H protein shuttles the methylamine group of glycine from the P protein to the T protein. The sequence is that of Glycine cleavage system H protein 5 from Aquifex aeolicus (strain VF5).